Reading from the N-terminus, the 1048-residue chain is Probable histidine kinase 2 (1048 aa).

The Cytoplasmic portion of the chain corresponds to 1–16 (MREVEEVSKWRRRCCY). The helical transmembrane segment at 17 to 37 (FWILFPLAVIATCMTITVVTF) threads the bilayer. Over 38–336 (CSSTMYMTEV…AMVGVFRRGG (299 aa)) the chain is Extracellular. The chain crosses the membrane as a helical span at residues 337-357 (VTMVAVACAAAAAATVACVLM). The Cytoplasmic portion of the chain corresponds to 358-1048 (ARALRRAVAR…AVHGVCKGKN (691 aa)). A Histidine kinase domain is found at 398-662 (SASHDIRSAL…CFGFNVLLKT (265 aa)). Residue His-401 is modified to Phosphohistidine; by autocatalysis. The Response regulatory domain maps to 912–1044 (HVLLVEDTLV…RIVEAVHGVC (133 aa)). Asp-975 carries the 4-aspartylphosphate modification.

Post-translationally, activation probably requires a transfer of a phosphate group between a His in the transmitter domain and an Asp of the receiver domain.

The protein localises to the cell membrane. It catalyses the reaction ATP + protein L-histidine = ADP + protein N-phospho-L-histidine.. Its function is as follows. Cytokinin receptor related to bacterial two-component regulators. Functions as a histidine kinase and transmits the stress signal to a downstream MAPK cascade. This Oryza sativa subsp. indica (Rice) protein is Probable histidine kinase 2.